We begin with the raw amino-acid sequence, 184 residues long: Probable RNA 2'-phosphotransferase (184 aa).

It belongs to the KptA/TPT1 family.

In terms of biological role, removes the 2'-phosphate from RNA via an intermediate in which the phosphate is ADP-ribosylated by NAD followed by a presumed transesterification to release the RNA and generate ADP-ribose 1''-2''-cyclic phosphate (APPR&gt;P). May function as an ADP-ribosylase. In Burkholderia pseudomallei (strain K96243), this protein is Probable RNA 2'-phosphotransferase.